The chain runs to 441 residues: Methylenetetrahydrofolate--tRNA-(uracil-5-)-methyltransferase TrmFO (441 aa).

Gly-7–Gly-12 contributes to the FAD binding site.

This sequence belongs to the MnmG family. TrmFO subfamily. FAD serves as cofactor.

The protein resides in the cytoplasm. It catalyses the reaction uridine(54) in tRNA + (6R)-5,10-methylene-5,6,7,8-tetrahydrofolate + NADH + H(+) = 5-methyluridine(54) in tRNA + (6S)-5,6,7,8-tetrahydrofolate + NAD(+). The enzyme catalyses uridine(54) in tRNA + (6R)-5,10-methylene-5,6,7,8-tetrahydrofolate + NADPH + H(+) = 5-methyluridine(54) in tRNA + (6S)-5,6,7,8-tetrahydrofolate + NADP(+). In terms of biological role, catalyzes the folate-dependent formation of 5-methyl-uridine at position 54 (M-5-U54) in all tRNAs. The polypeptide is Methylenetetrahydrofolate--tRNA-(uracil-5-)-methyltransferase TrmFO (Pseudothermotoga lettingae (strain ATCC BAA-301 / DSM 14385 / NBRC 107922 / TMO) (Thermotoga lettingae)).